We begin with the raw amino-acid sequence, 180 residues long: Inner membrane-spanning protein YciB (180 aa).

5 helical membrane passes run 11-31 (ILFFVVYKLAGIREAAIALII), 52-72 (IIMGIAVVFFGTLTAYFNKVE), 76-96 (WKVTIVYALFALILLISQYGF), 121-141 (LAWAGFFILCMLINIYISQYC), and 149-169 (FKSFGIIAMTFIATLFTGIYV).

This sequence belongs to the YciB family.

It localises to the cell inner membrane. In terms of biological role, plays a role in cell envelope biogenesis, maintenance of cell envelope integrity and membrane homeostasis. This is Inner membrane-spanning protein YciB from Mannheimia succiniciproducens (strain KCTC 0769BP / MBEL55E).